The chain runs to 307 residues: NmrA-like family domain-containing oxidoreductase flvB (307 aa).

NADP(+)-binding positions include 4-9 (LITGAT), 32-36 (SSSSP), 53-54 (DY), 74-76 (STN), and 148-151 (YVEG).

This sequence belongs to the NmrA-type oxidoreductase family.

The catalysed reaction is (2S)-5,5-dimethyl-2,3,4,5-tetrahydropyridine-2,6-dicarboxylate + NADPH + 2 H(+) = (6S)-3,3-dimethylpiperidine-2,6-dicarboxylate + NADP(+). It catalyses the reaction (2S)-5,5-dimethyl-2,3,4,5-tetrahydropyridine-2,6-dicarboxylate + NADH + 2 H(+) = (6S)-3,3-dimethylpiperidine-2,6-dicarboxylate + NAD(+). It functions in the pathway secondary metabolite biosynthesis; terpenoid biosynthesis. Its function is as follows. NmrA-like family domain-containing oxidoreductase; part of the gene cluster that mediates the biosynthesis of flavunoidine, an alkaloidal terpenoid with a tetracyclic cage-like core connected to dimethylcadaverine via a C-N bond and acylated with 5,5-dimethyl-L-pipecolate. The tetracyclic core is synthesized by the terpene cyclase flvE and the cytochrome P450 monooxygenase flvD. The terpene cyclase flvE catalyzes the cyclization of farnesyl pyrophosphate (FPP) to form (1R,4R,5S)-(+)-acoradiene and the cytochrome P450 monooxygenase flvD is then responsible for oxidative conversion of (1R,4R,5S)-(+)-acoradiene into the tetracyclic cage present in the final product flavunoidine. In parallel, the N-methyltransferase flvH dimethylates L-lysine to give N,N-dimethyl-L-Lysin which is decarboxylated by flvG to afford dimethylcadaverine. The terpene cyclase-like protein flvF is the enzyme that attaches the dimethylcadaverine precusor at the C-7 of the tetracyclic cage to yield pre-flavunoidine. The cytochrome monooxygenase flvC hydroxylates the C-10 position of pre-flavunoidine whereas the NRPS flvI acylates the terpenoid core at the hydroxylated C-10 with dimethylpipecolate to yield final flavunoidine. The bifunctional enzyme flvA and the dehydrogenase flvB are responsible for the synthesis of the dimethylpipecolate precursor. The PLP-dependent lyase domain of flvA might use L-O-acetyl-homoserine and alpha-keto-isovalerate to form an intermediary ketone that can cyclize intramolecularly to yield an imine. The imine can be reduced by flvB to yield the 6-carboxylated pipecolate. The C-terminal alpha-KG-dependent oxygenase domain of flvA is then proposed to catalyze the decarboxylation to yield dimethylpipecolate. This Aspergillus flavus (strain ATCC 200026 / FGSC A1120 / IAM 13836 / NRRL 3357 / JCM 12722 / SRRC 167) protein is NmrA-like family domain-containing oxidoreductase flvB.